Here is a 369-residue protein sequence, read N- to C-terminus: Histidinol-phosphate aminotransferase (369 aa).

Residues M1–P39 are disordered. The residue at position 230 (K230) is an N6-(pyridoxal phosphate)lysine.

It belongs to the class-II pyridoxal-phosphate-dependent aminotransferase family. Histidinol-phosphate aminotransferase subfamily. Homodimer. Requires pyridoxal 5'-phosphate as cofactor.

The catalysed reaction is L-histidinol phosphate + 2-oxoglutarate = 3-(imidazol-4-yl)-2-oxopropyl phosphate + L-glutamate. It participates in amino-acid biosynthesis; L-histidine biosynthesis; L-histidine from 5-phospho-alpha-D-ribose 1-diphosphate: step 7/9. The protein is Histidinol-phosphate aminotransferase (hisC) of Streptomyces avermitilis (strain ATCC 31267 / DSM 46492 / JCM 5070 / NBRC 14893 / NCIMB 12804 / NRRL 8165 / MA-4680).